Consider the following 128-residue polypeptide: Holo-[acyl-carrier-protein] synthase (128 aa).

Asp-9 and Glu-60 together coordinate Mg(2+).

The protein belongs to the P-Pant transferase superfamily. AcpS family. Mg(2+) is required as a cofactor.

Its subcellular location is the cytoplasm. The enzyme catalyses apo-[ACP] + CoA = holo-[ACP] + adenosine 3',5'-bisphosphate + H(+). Transfers the 4'-phosphopantetheine moiety from coenzyme A to a Ser of acyl-carrier-protein. This is Holo-[acyl-carrier-protein] synthase from Buchnera aphidicola subsp. Baizongia pistaciae (strain Bp).